The primary structure comprises 110 residues: uncharacterized protein (110 aa).

The tract at residues 1–72 (MWRSSNQRGV…NHRNIHLRNP (72 aa)) is disordered. Residues 10–23 (VSRRRDKSMRKYTR) show a composition bias toward basic residues. Over residues 48 to 57 (KNTYTGNISS) the composition is skewed to polar residues.

This is an uncharacterized protein from Human herpesvirus 6A (strain Uganda-1102) (HHV-6 variant A).